A 456-amino-acid chain; its full sequence is Alcohol acyl transferase 1 allele GSc (456 aa).

Residues histidine 165 and asparagine 386 each act as proton acceptor in the active site.

It belongs to the plant acyltransferase family. In terms of tissue distribution, expressed at very low levels in the skin of ripe fruit.

In terms of biological role, involved in the biosynthesis of volatile esters which confer ripe apple fruit flavor. Alcohol acyl transferase that can use a wide range of alcohols as substrate to produce esters. The protein is Alcohol acyl transferase 1 allele GSc of Malus domestica (Apple).